Reading from the N-terminus, the 219-residue chain is UPF0073 inner membrane protein YqfA (219 aa).

The Cytoplasmic segment spans residues 1 to 23; that stretch reads MVQKPLIKQGYSLAEEIANSVSH. A helical transmembrane segment spans residues 24-44; sequence GIGLVFGIVGLVLLLVQAVDL. At 45–53 the chain is on the periplasmic side; the sequence is NASATAITS. A helical membrane pass occupies residues 54-74; it reads YSLYGGSMILLFLASTLYHAI. Topologically, residues 75–90 are cytoplasmic; that stretch reads PHQRAKMWLKKFDHCA. The chain crosses the membrane as a helical span at residues 91–111; the sequence is IYLLIAGTYTPFLLVGLDSPL. Over 112–113 the chain is Periplasmic; sequence AR. A helical transmembrane segment spans residues 114–134; that stretch reads GLMIVIWSLALLGILFKLTIA. At 135–138 the chain is on the cytoplasmic side; that stretch reads HRFK. Residues 139–159 traverse the membrane as a helical segment; the sequence is ILSLVTYLAMGWLSLVVIYEM. Topologically, residues 160 to 165 are periplasmic; sequence AVKLAA. The helical transmembrane segment at 166 to 186 threads the bilayer; the sequence is GSVTLLAVGGVVYSLGVIFYV. Over 187–195 the chain is Cytoplasmic; that stretch reads CKRIPYNHA. Residues 196 to 216 traverse the membrane as a helical segment; that stretch reads IWHGFVLGGSVCHFLAIYLYI. Residues 217 to 219 are Periplasmic-facing; sequence GQA.

Belongs to the UPF0073 (Hly-III) family.

The protein resides in the cell inner membrane. The polypeptide is UPF0073 inner membrane protein YqfA (yqfA) (Escherichia coli O157:H7).